A 171-amino-acid polypeptide reads, in one-letter code: MDELKNIIRDIPDFPKKGIVFKDITTLLADAKSFQRMVDLLAHRYVGEKIDKVVGVEARGFILGAALAYKLGAGVVLVRKPGKLPSETFSKTYQLEYGTDSLEIHTDAIRKGEKVLIADDVLATGGTMSAVVEMVRDLGGEIVECCFLAELDFLGGRKKLPDGKVFSLLTF.

The protein belongs to the purine/pyrimidine phosphoribosyltransferase family. In terms of assembly, homodimer.

The protein resides in the cytoplasm. The catalysed reaction is AMP + diphosphate = 5-phospho-alpha-D-ribose 1-diphosphate + adenine. The protein operates within purine metabolism; AMP biosynthesis via salvage pathway; AMP from adenine: step 1/1. Functionally, catalyzes a salvage reaction resulting in the formation of AMP, that is energically less costly than de novo synthesis. This is Adenine phosphoribosyltransferase from Geobacter metallireducens (strain ATCC 53774 / DSM 7210 / GS-15).